The sequence spans 396 residues: MKVLVINAGSSSIKYQLLDMSTGNDLASGIVERIGEEMGSISYKTGEKYTAEQPFPTHREGMVEVINLLTDADKGVVKDKAEIAAIGHRIVHGGELFFEPVEIDDKVLQGIRDCIPLAPLHNPGHVIGIETAMELFPGVRQVAVFDTSFHQTMEPKAYMYGVPYKYYEDWGLRRYGAHGTSHKYVARETAKLLGKPLEESNIITVHLGNGASISAVKNGKCYDTSMGLTPLGGIIMGTRCGDIDPAIVGFIAERTKQSAAEVVATLTNESGLKGICGSNDLRDIHARIEEGDEKAKLALDMACHKVRQFIGAYAFELGRVDAIVFTAGIGENDEIYRENCLSGLENFGITINKEKNENWDRTPSFISEDDGAVKVAIIATNEELEIANDTVKVLGL.

Asn7 contributes to the Mg(2+) binding site. Lys14 provides a ligand contact to ATP. Arg89 is a binding site for substrate. Asp146 serves as the catalytic Proton donor/acceptor. ATP contacts are provided by residues 206–210, 280–282, and 328–332; these read HLGNG, DLR, and GIGEN. A Mg(2+)-binding site is contributed by Glu382.

Belongs to the acetokinase family. As to quaternary structure, homodimer. It depends on Mg(2+) as a cofactor. Requires Mn(2+) as cofactor.

The protein localises to the cytoplasm. It catalyses the reaction acetate + ATP = acetyl phosphate + ADP. The protein operates within metabolic intermediate biosynthesis; acetyl-CoA biosynthesis; acetyl-CoA from acetate: step 1/2. Functionally, catalyzes the formation of acetyl phosphate from acetate and ATP. Can also catalyze the reverse reaction. The chain is Acetate kinase from Maridesulfovibrio salexigens (strain ATCC 14822 / DSM 2638 / NCIMB 8403 / VKM B-1763) (Desulfovibrio salexigens).